The primary structure comprises 620 residues: UDP-glucose:protein N-beta-glucosyltransferase (620 aa).

It belongs to the glycosyltransferase 41 family.

The protein localises to the cytoplasm. It carries out the reaction L-asparaginyl-[protein] + UDP-alpha-D-glucose = N(4)-(beta-D-glucosyl)-L-asparaginyl-[protein] + UDP + H(+). The protein operates within protein modification; protein glycosylation. In terms of biological role, inverting glycosyltransferase that catalyzes the transfer of one glucose moiety from UDP-glucose to an asparagine residue in peptides and proteins containing the NX(S/T) motif, resulting in their modification with a beta-linked 1,N-glucose. Likely acts as a key component of a general protein glycosylation system. The protein is UDP-glucose:protein N-beta-glucosyltransferase of Actinobacillus pleuropneumoniae serotype 5b (strain L20).